A 247-amino-acid chain; its full sequence is tRNA pseudouridine synthase A (247 aa).

The active-site Nucleophile is Asp-53. Position 111 (Tyr-111) interacts with substrate.

The protein belongs to the tRNA pseudouridine synthase TruA family. In terms of assembly, homodimer.

It carries out the reaction uridine(38/39/40) in tRNA = pseudouridine(38/39/40) in tRNA. Its function is as follows. Formation of pseudouridine at positions 38, 39 and 40 in the anticodon stem and loop of transfer RNAs. The polypeptide is tRNA pseudouridine synthase A (Bacillus pumilus (strain SAFR-032)).